Reading from the N-terminus, the 46-residue chain is Diuretic hormone (46 aa).

Isoleucine 46 is subject to Isoleucine amide.

This sequence belongs to the sauvagine/corticotropin-releasing factor/urotensin I family.

Its subcellular location is the secreted. Regulation of fluid secretion. Stimulates primary urine secretion by Malpighian tubules and causes a dose-dependent stimulation of cAMP levels in the tubules. In Periplaneta americana (American cockroach), this protein is Diuretic hormone.